Consider the following 379-residue polypeptide: MFGMLRALKTHVEAPIVVATRAASTNAEKLEEIRERLAKGPNFQDFVQNPDNSRSEWENYEGKLRREKGEEQRLRLPPWLKTTIPVGKNYAKIKAQMRELKLSTVCEEARCPNIGECWGGGEHGTQTATIMLMGDTCTRGCRFCSVKTARKPPPLDVNEPVNTATAIASWGLDYIVLTSVDRDDLPDGGSKHIAETVREIKARNSNIFVECLVPDFRGNLECVETIANSGLDVYAHNIETVEKLTPYVRDRRAHYRQTLQVLTEAKRFNPNLITKSSIMLGLGETDEEIESTLKDLRTAGVDCVTLGQYMQPTNKHLKVIEYVTPEKFKHWEERGNELGFLYTASGPLVRSSYKAGEFFITSILENRKKRQNATELSKE.

Cys106, Cys111, Cys117, Cys137, Cys141, Cys144, and Ser352 together coordinate [4Fe-4S] cluster. One can recognise a Radical SAM core domain in the interval 122 to 341; it reads EHGTQTATIM…EERGNELGFL (220 aa).

The protein belongs to the radical SAM superfamily. Lipoyl synthase family. [4Fe-4S] cluster serves as cofactor.

Its subcellular location is the mitochondrion. The catalysed reaction is [[Fe-S] cluster scaffold protein carrying a second [4Fe-4S](2+) cluster] + N(6)-octanoyl-L-lysyl-[protein] + 2 oxidized [2Fe-2S]-[ferredoxin] + 2 S-adenosyl-L-methionine + 4 H(+) = [[Fe-S] cluster scaffold protein] + N(6)-[(R)-dihydrolipoyl]-L-lysyl-[protein] + 4 Fe(3+) + 2 hydrogen sulfide + 2 5'-deoxyadenosine + 2 L-methionine + 2 reduced [2Fe-2S]-[ferredoxin]. The protein operates within protein modification; protein lipoylation via endogenous pathway; protein N(6)-(lipoyl)lysine from octanoyl-[acyl-carrier-protein]: step 2/2. Its function is as follows. Catalyzes the radical-mediated insertion of two sulfur atoms into the C-6 and C-8 positions of the octanoyl moiety bound to the lipoyl domains of lipoate-dependent enzymes, thereby converting the octanoylated domains into lipoylated derivatives. This is Lipoyl synthase 1, mitochondrial from Drosophila yakuba (Fruit fly).